Here is a 149-residue protein sequence, read N- to C-terminus: Putative pre-16S rRNA nuclease (149 aa).

This sequence belongs to the YqgF nuclease family.

Its subcellular location is the cytoplasm. In terms of biological role, could be a nuclease involved in processing of the 5'-end of pre-16S rRNA. This chain is Putative pre-16S rRNA nuclease, found in Synechococcus elongatus (strain ATCC 33912 / PCC 7942 / FACHB-805) (Anacystis nidulans R2).